Consider the following 245-residue polypeptide: Small ribosomal subunit protein uS2 (245 aa).

It belongs to the universal ribosomal protein uS2 family.

This Pseudomonas fluorescens (strain Pf0-1) protein is Small ribosomal subunit protein uS2.